A 363-amino-acid chain; its full sequence is Carbamoyl phosphate synthase small chain (363 aa).

Positions 1 to 173 (MMKAFLVLDN…SKYIFGTHTG (173 aa)) are CPSase. Residues serine 46, glycine 225, and glycine 227 each coordinate L-glutamine. One can recognise a Glutamine amidotransferase type-1 domain in the interval 177–363 (KLAVYDYGVK…YDLVEKTKKG (187 aa)). Cysteine 253 (nucleophile) is an active-site residue. The L-glutamine site is built by leucine 254, glutamine 257, asparagine 295, glycine 297, and phenylalanine 298. Residues histidine 336 and glutamate 338 contribute to the active site.

This sequence belongs to the CarA family. In terms of assembly, composed of two chains; the small (or glutamine) chain promotes the hydrolysis of glutamine to ammonia, which is used by the large (or ammonia) chain to synthesize carbamoyl phosphate. Tetramer of heterodimers (alpha,beta)4.

It carries out the reaction hydrogencarbonate + L-glutamine + 2 ATP + H2O = carbamoyl phosphate + L-glutamate + 2 ADP + phosphate + 2 H(+). The enzyme catalyses L-glutamine + H2O = L-glutamate + NH4(+). The protein operates within amino-acid biosynthesis; L-arginine biosynthesis; carbamoyl phosphate from bicarbonate: step 1/1. It functions in the pathway pyrimidine metabolism; UMP biosynthesis via de novo pathway; (S)-dihydroorotate from bicarbonate: step 1/3. Functionally, small subunit of the glutamine-dependent carbamoyl phosphate synthetase (CPSase). CPSase catalyzes the formation of carbamoyl phosphate from the ammonia moiety of glutamine, carbonate, and phosphate donated by ATP, constituting the first step of 2 biosynthetic pathways, one leading to arginine and/or urea and the other to pyrimidine nucleotides. The small subunit (glutamine amidotransferase) binds and cleaves glutamine to supply the large subunit with the substrate ammonia. This chain is Carbamoyl phosphate synthase small chain, found in Leptospira interrogans serogroup Icterohaemorrhagiae serovar copenhageni (strain Fiocruz L1-130).